Here is a 501-residue protein sequence, read N- to C-terminus: Phosphatase and actin regulator 1 (501 aa).

The stretch at 1 to 18 (MRQSREELIKRGVLKEIF) is one RPEL 1 repeat. Disordered stretches follow at residues 21 to 46 (DGELSIPNEEGALENGQPLGSGQVLS) and 295 to 329 (DNKENVPHEADYEDSSCLYPRQEEEEEEDEDEDNS). A compositionally biased stretch (low complexity) spans 36–46 (GQPLGSGQVLS). The segment covering 295–304 (DNKENVPHEA) has biased composition (basic and acidic residues). Residues 317-328 (EEEEEEDEDEDN) show a composition bias toward acidic residues. RPEL repeat units lie at residues 343 to 368 (DSLAIKLSNRPSKRELEEKNILPMQT), 381 to 406 (TKLTRRLSQRPTAEELEQRNILKPRN), and 419 to 444 (RRLTRKLSQRPTVEELRERKILIRFS). A disordered region spans residues 382–415 (KLTRRLSQRPTAEELEQRNILKPRNEQEEQEEKR). A compositionally biased stretch (basic and acidic residues) spans 392–415 (TAEELEQRNILKPRNEQEEQEEKR).

Belongs to the phosphatase and actin regulator family. In terms of assembly, interacts (via RPEL repeats) with ACTA1. Expressed in the gizzard, and in neurons from central and peripheral nervous systems.

The protein resides in the cytoplasm. The protein localises to the synapse. Its subcellular location is the nucleus. In terms of biological role, binds actin monomers (G actin) and plays a role in the reorganization of the actin cytoskeleton and in formation of actin stress fibers. The sequence is that of Phosphatase and actin regulator 1 (PHACTR1) from Gallus gallus (Chicken).